Consider the following 527-residue polypeptide: SusD-like protein P25 (527 aa).

The first 15 residues, 1–15, serve as a signal peptide directing secretion; it reads MKIQNIIVYVFLIFS. Cys16 carries the N-palmitoyl cysteine lipid modification. Cys16 is lipidated: S-diacylglycerol cysteine.

The protein belongs to the SusD family.

The protein localises to the cell outer membrane. In terms of biological role, polysaccharide-binding protein probably involved in ulvan degradation. Ulvan is the main polysaccharide component of the Ulvales (green seaweed) cell wall. It is composed of disaccharide building blocks comprising 3-sulfated rhamnose (Rha3S) linked to D-glucuronic acid (GlcA), L-iduronic acid (IduA), or D-xylose (Xyl). The SusD-like protein may mediate ulvan oligomer-binding before transport in the periplasm for further degradation. This Formosa agariphila (strain DSM 15362 / KCTC 12365 / LMG 23005 / KMM 3901 / M-2Alg 35-1) protein is SusD-like protein P25.